The primary structure comprises 505 residues: ATP synthase subunit alpha, chloroplastic (505 aa).

170 to 177 (GDRQTGKT) provides a ligand contact to ATP.

It belongs to the ATPase alpha/beta chains family. F-type ATPases have 2 components, CF(1) - the catalytic core - and CF(0) - the membrane proton channel. CF(1) has five subunits: alpha(3), beta(3), gamma(1), delta(1), epsilon(1). CF(0) has four main subunits: a, b, b' and c.

Its subcellular location is the plastid. It is found in the chloroplast thylakoid membrane. It catalyses the reaction ATP + H2O + 4 H(+)(in) = ADP + phosphate + 5 H(+)(out). Functionally, produces ATP from ADP in the presence of a proton gradient across the membrane. The alpha chain is a regulatory subunit. The chain is ATP synthase subunit alpha, chloroplastic from Phaeodactylum tricornutum (strain CCAP 1055/1).